Reading from the N-terminus, the 465-residue chain is MKHIVKHIHFVGIGGAGMSGIAEVLVNLGYQVSGSDLARNAVTERLEALGARVSIGHDAANIEGANAVVVSTAVRSDNPEVLAARRLRVPIVPRAVMLAELMRLKQGIAIAGTHGKTTTTSLVASVLAAGGLDPTFVIGGRLTSAGANARLGMGDFIVAEADESDASFLNLYPVIEVITNIDADHMDTYGHDFARLKQAFIEFTQRLPFYGSAVVCIDDANVRQIVPLISKPVVRYGFAADAQVRAENVEARDGRMHFTVRREGREPLPVVLNLPGLHNVQNALAAIAIATDLDVADAAIQQALAEFNGVGRRFQRYGEIAAAGGGAYTLIDDYGHHPVEMAATIAAARGAFPGRRLVLAFQPHRYTRTRDCFDDFVNVLSTVDALVLTEVYAAGEAPISTANGDALSRALRAAGKVEPVFVATVDEVPDALAKLARDGDVVITMGAGSIGGVPGKLAQDTQQKG.

112–118 (GTHGKTT) is a binding site for ATP.

It belongs to the MurCDEF family.

It localises to the cytoplasm. The enzyme catalyses UDP-N-acetyl-alpha-D-muramate + L-alanine + ATP = UDP-N-acetyl-alpha-D-muramoyl-L-alanine + ADP + phosphate + H(+). The protein operates within cell wall biogenesis; peptidoglycan biosynthesis. Cell wall formation. This is UDP-N-acetylmuramate--L-alanine ligase from Burkholderia mallei (strain NCTC 10247).